Here is a 758-residue protein sequence, read N- to C-terminus: MIIRSPEPKVQILADPEVKILVDRDPIKTSFEQWAKPGHFSRTIAKGPDTTTWIWNLHADAHDFDSHTSDLEEISRKVFSAHFGQLSIIFLWLSGMYFHGARFSNYEAWLNDPTHIGPSAQVVWPIVGQEILNGDVGGGFRGIQITSGFFQIWRASGITSELQLYCTAIGALVFAGLMLFAGWFHYHKAAPKLAWFQDVESMLNHHLAGLLGLGSLSWARHQVHVSLPINQFLNAGVDPKEIPLPHEFILNRDLLAQLYPSFAEGATPFFTLNWSKYADFLTFRGGLDPLTGGLWLTDIAHHHLAIAILFLIAGHMYRTNWGIGHGIKDILEAHKGPFTGQGHKGLYEILTTSWHAQLSINLAMLGSLTIVVAQHMYSMPPYPYLATDYATQLSLFTHHMWIGGFLIVGAAAHAAIFMVRDYDPTTRYNDLLDRVLRHRDAIISHLNWVCIFLGFHSFGLYIHNDTMSALGRPQDMFSDTAIQLQPVFAQWIQNTHALAPGTTAPGATASTSLTWGGGDLVAVGNKVALLPIPLGTADFLVHHIHAFTIHVTVLILLKGVLFARSSRLIPDKANLGFRFPCDGPGRGGTCQVSAWDHVFLGLFWMYNSISVVIFHFSWKMQSDVWGTINDQGVVTHITAGNFAQSSITINGWLRDFLWAQASQVIQSYGSSLSAYGLFFLGAHFVWAFSLMFLFSGRGYWQELIESIVWAHNKLKVAPATQPRALSIVQGRAVGVTHYLLGGIATTWAFFLARIIAVG.

8 consecutive transmembrane segments (helical) span residues 78 to 101, 164 to 187, 203 to 227, 299 to 317, 354 to 377, 393 to 419, 441 to 463, and 539 to 557; these read VFSAHFGQLSIIFLWLSGMYFHGA, LYCTAIGALVFAGLMLFAGWFHYH, LNHHLAGLLGLGSLSWARHQVHVSL, IAHHHLAIAILFLIAGHMY, WHAQLSINLAMLGSLTIVVAQHMY, LSLFTHHMWIGGFLIVGAAAHAAIFMV, AIISHLNWVCIFLGFHSFGLYIH, and FLVHHIHAFTIHVTVLILL. Residues C581 and C590 each contribute to the [4Fe-4S] cluster site. 2 helical membrane-spanning segments follow: residues 597–618 and 672–694; these read HVFLGLFWMYNSISVVIFHFSW and LSAYGLFFLGAHFVWAFSLMFLF. Residue H683 participates in chlorophyll a' binding. Chlorophyll a is bound by residues M691 and Y699. W700 provides a ligand contact to phylloquinone. A helical transmembrane segment spans residues 732-753; the sequence is AVGVTHYLLGGIATTWAFFLAR.

The protein belongs to the PsaA/PsaB family. The PsaA/B heterodimer binds the P700 chlorophyll special pair and subsequent electron acceptors. PSI consists of a core antenna complex that captures photons, and an electron transfer chain that converts photonic excitation into a charge separation. The eukaryotic PSI reaction center is composed of at least 11 subunits. The cofactor is P700 is a chlorophyll a/chlorophyll a' dimer, A0 is one or more chlorophyll a, A1 is one or both phylloquinones and FX is a shared 4Fe-4S iron-sulfur center..

The protein resides in the plastid. It localises to the chloroplast thylakoid membrane. It carries out the reaction reduced [plastocyanin] + hnu + oxidized [2Fe-2S]-[ferredoxin] = oxidized [plastocyanin] + reduced [2Fe-2S]-[ferredoxin]. Its function is as follows. PsaA and PsaB bind P700, the primary electron donor of photosystem I (PSI), as well as the electron acceptors A0, A1 and FX. PSI is a plastocyanin-ferredoxin oxidoreductase, converting photonic excitation into a charge separation, which transfers an electron from the donor P700 chlorophyll pair to the spectroscopically characterized acceptors A0, A1, FX, FA and FB in turn. Oxidized P700 is reduced on the lumenal side of the thylakoid membrane by plastocyanin. This chain is Photosystem I P700 chlorophyll a apoprotein A1, found in Pisum sativum (Garden pea).